Here is a 224-residue protein sequence, read N- to C-terminus: uncharacterized protein (224 aa).

Residues 108-137 (QLALDRAELNESIRATNENLALQYSKLQTE) are a coiled coil.

This is an uncharacterized protein from Human picobirnavirus (strain Human/Thailand/Hy005102/-) (PBV).